Consider the following 93-residue polypeptide: Protein S100-A5 (93 aa).

2 EF-hand domains span residues 12–47 (MVTT…LAEK) and 48–83 (MKES…LCMA). 7 residues coordinate Ca(2+): Thr-28, Glu-33, Asp-61, Asn-63, Asp-65, Glu-67, and Glu-72.

This sequence belongs to the S-100 family. As to quaternary structure, homodimer.

Binds calcium, zinc and copper. One subunit can simultaneously bind 2 calcium ions or 2 copper ions plus 1 zinc ion. Calcium and copper ions compete for the same binding sites. The polypeptide is Protein S100-A5 (S100a5) (Mus musculus (Mouse)).